A 461-amino-acid polypeptide reads, in one-letter code: PE-PGRS family protein PE_PGRS45 (461 aa).

Residues 4–92 (VNVAPQLVST…GSTYAVAEAA (89 aa)) form the PE domain. 2 disordered regions span residues 232 to 251 (GGAG…GGNG) and 426 to 461 (AGSL…GADG). Positions 434–446 (PGFGGPGGSGGAS) are enriched in gly residues.

Belongs to the mycobacterial PE family. PGRS subfamily. Interacts with human TIMM23, which is part of a complex that mediates the translocation of transit peptide-containing proteins across the mitochondrial inner membrane.

Its subcellular location is the cell membrane. It localises to the secreted. It is found in the cell wall. The protein resides in the host mitochondrion. It catalyses the reaction hexadecanal + NADP(+) + CoA = hexadecanoyl-CoA + NADPH + H(+). Its activity is regulated as follows. Oxidoreductase activity is inhibited by the first line anti-tubercular drug isoniazid (INH). In terms of biological role, may be an effector protein that contributes to pathogenesis by targeting host mitochondria, where it modulates host cellular processes. In THP1 macrophages, increases the ADP-to-ATP ratio and increases the cellular ROS levels. Also induces mitochondrial perturbations through membrane depolarization, release of mitochondrial superoxide, up-regulation of expression of host proapoptotic proteins (BAX and BIM) and release of cytochrome C into the cytosol. May bind calcium to increase intracellular calcium influx, which may further lead to mitochondrial perturbations. Mitochondrial perturbations and alteration of Ca(2+) influx are independent but simultaneous events. Functionally, in vitro, shows NADPH-dependent fatty acyl coenzyme A oxidoreductase activity. Can oxidize palmitoyl-CoA, but not glutathione and thiourea. This Mycobacterium tuberculosis (strain ATCC 25618 / H37Rv) protein is PE-PGRS family protein PE_PGRS45.